We begin with the raw amino-acid sequence, 144 residues long: Large ribosomal subunit protein uL13 (144 aa).

Belongs to the universal ribosomal protein uL13 family. As to quaternary structure, part of the 50S ribosomal subunit.

Its function is as follows. This protein is one of the early assembly proteins of the 50S ribosomal subunit, although it is not seen to bind rRNA by itself. It is important during the early stages of 50S assembly. The protein is Large ribosomal subunit protein uL13 of Mycoplasma mobile (strain ATCC 43663 / 163K / NCTC 11711) (Mesomycoplasma mobile).